A 468-amino-acid polypeptide reads, in one-letter code: Methionine aminopeptidase 2 (468 aa).

A compositionally biased stretch (basic and acidic residues) spans 63-74 (AAKEATKKDAKG). Residues 63–87 (AAKEATKKDAKGGKGKANGSAAATA) are disordered. Residue H219 coordinates substrate. Residues D239, D250, and H319 each contribute to the a divalent metal cation site. H327 contributes to the substrate binding site. A divalent metal cation contacts are provided by E352 and E449.

Belongs to the peptidase M24A family. Methionine aminopeptidase eukaryotic type 2 subfamily. The cofactor is Co(2+). Requires Zn(2+) as cofactor. Mn(2+) serves as cofactor. Fe(2+) is required as a cofactor.

The protein resides in the cytoplasm. The catalysed reaction is Release of N-terminal amino acids, preferentially methionine, from peptides and arylamides.. Inhibited by the fumagillin analog, TNP-470. Functionally, cotranslationally removes the N-terminal methionine from nascent proteins. The N-terminal methionine is often cleaved when the second residue in the primary sequence is small and uncharged (Met-Ala-, Cys, Gly, Pro, Ser, Thr, or Val). Required for germ cell proliferation and/or differentiation. The protein is Methionine aminopeptidase 2 of Caenorhabditis elegans.